Consider the following 193-residue polypeptide: MAEHKPDIMYGTTIITVRKGGKVVMAGDGQVSLGQTIMKGNARKVRRLGKSGAVIAGFAGATADAFTLLERLETKLEQYPDQLMRACVELAKDWRTDRYLRRLEAMMLVADKKITLALTGLGDVLEPEDGIMAIGSGGNFALSAARALIDMDLDAETIARKAMNIAAKICVYTNDHFTIETLDAELSSLEKAI.

Residue Thr-12 is part of the active site. The Na(+) site is built by Ala-167, Cys-170, and Thr-173.

Belongs to the peptidase T1B family. HslV subfamily. A double ring-shaped homohexamer of HslV is capped on each side by a ring-shaped HslU homohexamer. The assembly of the HslU/HslV complex is dependent on binding of ATP.

Its subcellular location is the cytoplasm. It catalyses the reaction ATP-dependent cleavage of peptide bonds with broad specificity.. With respect to regulation, allosterically activated by HslU binding. Functionally, protease subunit of a proteasome-like degradation complex believed to be a general protein degrading machinery. The polypeptide is ATP-dependent protease subunit HslV (Bartonella henselae (strain ATCC 49882 / DSM 28221 / CCUG 30454 / Houston 1) (Rochalimaea henselae)).